Consider the following 160-residue polypeptide: MLKKLAWYWSFVELIKGFIITLRYAFKPKVTLKYPMEKGPLSPRFRGEHALRRYSNGEERCIACKLCEVICPAQAIVIEAEEREDGSRRTTRYDIDMTKCIYCGLCQEACPVDAIVEGPNFEFATETREELMYNKEKLLRNGEIWEEAIALRLKKDVSYH.

4Fe-4S ferredoxin-type domains lie at 52–81 (RRYS…IEAE) and 91–120 (TRYD…EGPN). Residues C61, C64, C67, C71, C100, C103, C106, and C110 each contribute to the [4Fe-4S] cluster site.

This sequence belongs to the complex I 23 kDa subunit family. NDH-1 is composed of 14 different subunits. Subunits NuoA, H, J, K, L, M, N constitute the membrane sector of the complex. [4Fe-4S] cluster is required as a cofactor.

The protein localises to the cell membrane. The catalysed reaction is a quinone + NADH + 5 H(+)(in) = a quinol + NAD(+) + 4 H(+)(out). Its function is as follows. NDH-1 shuttles electrons from NADH, via FMN and iron-sulfur (Fe-S) centers, to quinones in the respiratory chain. The immediate electron acceptor for the enzyme in this species is believed to be ubiquinone. Couples the redox reaction to proton translocation (for every two electrons transferred, four hydrogen ions are translocated across the cytoplasmic membrane), and thus conserves the redox energy in a proton gradient. The chain is NADH-quinone oxidoreductase subunit I from Wolbachia sp. subsp. Brugia malayi (strain TRS).